A 651-amino-acid polypeptide reads, in one-letter code: Probable potassium transport system protein Kup (651 aa).

Helical transmembrane passes span 41-61, 82-102, 130-150, 163-183, 194-214, 235-255, 276-296, 309-329, 366-386, 395-415, 426-446, and 450-470; these read LVLG…IYAF, VVSL…VLFV, LILG…VITP, IVAP…LVTL, VAIV…ASGL, FLTV…LAMT, WLWI…AFIL, MIPS…TVIA, IYIP…VLGF, AYGI…YIVM, ALPI…ANII, and EGGW…WTWV.

This sequence belongs to the HAK/KUP transporter (TC 2.A.72) family.

The protein localises to the cell inner membrane. The catalysed reaction is K(+)(in) + H(+)(in) = K(+)(out) + H(+)(out). In terms of biological role, transport of potassium into the cell. Likely operates as a K(+):H(+) symporter. In Brucella canis (strain ATCC 23365 / NCTC 10854 / RM-666), this protein is Probable potassium transport system protein Kup.